Reading from the N-terminus, the 393-residue chain is Formate-dependent phosphoribosylglycinamide formyltransferase (393 aa).

N(1)-(5-phospho-beta-D-ribosyl)glycinamide-binding positions include 22-23 (EL) and Glu82. ATP-binding positions include Arg114, Lys155, 160 to 165 (SSGHGQ), 195 to 198 (EGFI), and Glu203. In terms of domain architecture, ATP-grasp spans 119–308 (RLAAEELGLP…QFALHARAIL (190 aa)). Glu267 and Glu279 together coordinate Mg(2+). Residues Asp286, Lys356, and 363-364 (RR) each bind N(1)-(5-phospho-beta-D-ribosyl)glycinamide.

The protein belongs to the PurK/PurT family. Homodimer.

It carries out the reaction N(1)-(5-phospho-beta-D-ribosyl)glycinamide + formate + ATP = N(2)-formyl-N(1)-(5-phospho-beta-D-ribosyl)glycinamide + ADP + phosphate + H(+). Its pathway is purine metabolism; IMP biosynthesis via de novo pathway; N(2)-formyl-N(1)-(5-phospho-D-ribosyl)glycinamide from N(1)-(5-phospho-D-ribosyl)glycinamide (formate route): step 1/1. Its function is as follows. Involved in the de novo purine biosynthesis. Catalyzes the transfer of formate to 5-phospho-ribosyl-glycinamide (GAR), producing 5-phospho-ribosyl-N-formylglycinamide (FGAR). Formate is provided by PurU via hydrolysis of 10-formyl-tetrahydrofolate. This Haemophilus ducreyi (strain 35000HP / ATCC 700724) protein is Formate-dependent phosphoribosylglycinamide formyltransferase.